The following is a 260-amino-acid chain: Malonyl-[acyl-carrier protein] O-methyltransferase (260 aa).

It belongs to the methyltransferase superfamily.

It catalyses the reaction malonyl-[ACP] + S-adenosyl-L-methionine = malonyl-[ACP] methyl ester + S-adenosyl-L-homocysteine. It functions in the pathway cofactor biosynthesis; biotin biosynthesis. Functionally, converts the free carboxyl group of a malonyl-thioester to its methyl ester by transfer of a methyl group from S-adenosyl-L-methionine (SAM). It allows to synthesize pimeloyl-ACP via the fatty acid synthetic pathway. This Haemophilus influenzae (strain ATCC 51907 / DSM 11121 / KW20 / Rd) protein is Malonyl-[acyl-carrier protein] O-methyltransferase.